The following is a 539-amino-acid chain: uncharacterized protein (539 aa).

Belongs to the transposase 25 family.

This is an uncharacterized protein from Sinorhizobium fredii (strain NBRC 101917 / NGR234).